We begin with the raw amino-acid sequence, 422 residues long: Tyrosine-protein kinase STYK1 (422 aa).

The chain crosses the membrane as a helical span at residues 26 to 46 (VIIVPTLLVTIFLILLGVILW). The Protein kinase domain occupies 114–384 (SEVLEQICSG…ELRLRLEAAI (271 aa)). ATP is bound by residues 120–128 (ICSGSCGPI) and Lys-147. Asp-251 acts as the Proton acceptor in catalysis.

It belongs to the protein kinase superfamily. Tyr protein kinase family. Widely expressed. Highly expressed in brain, placenta and prostate. Expressed in tumor cells such as hepatoma cells L-02, cervix carcinoma cells HeLa, ovary cancer cells Ho8910 and chronic myelogenous leukemia cells K-562, but not in other tumor cells such as epidermoid carcinoma (A-431). Undetectable in most normal lung tissues, widely expressed in lung cancers.

Its subcellular location is the membrane. The catalysed reaction is L-tyrosyl-[protein] + ATP = O-phospho-L-tyrosyl-[protein] + ADP + H(+). Its function is as follows. Probable tyrosine protein-kinase, which has strong transforming capabilities on a variety of cell lines. When overexpressed, it can also induce tumor cell invasion as well as metastasis in distant organs. May act by activating both MAP kinase and phosphatidylinositol 3'-kinases (PI3K) pathways. This chain is Tyrosine-protein kinase STYK1 (STYK1), found in Homo sapiens (Human).